We begin with the raw amino-acid sequence, 277 residues long: 3-methyl-2-oxobutanoate hydroxymethyltransferase (277 aa).

Mg(2+) contacts are provided by D43 and D82. 3-methyl-2-oxobutanoate contacts are provided by residues 43–44, D82, and K112; that span reads DS. E114 lines the Mg(2+) pocket. Catalysis depends on E181, which acts as the Proton acceptor.

The protein belongs to the PanB family. Homodecamer; pentamer of dimers. It depends on Mg(2+) as a cofactor.

It localises to the cytoplasm. It carries out the reaction 3-methyl-2-oxobutanoate + (6R)-5,10-methylene-5,6,7,8-tetrahydrofolate + H2O = 2-dehydropantoate + (6S)-5,6,7,8-tetrahydrofolate. Its pathway is cofactor biosynthesis; (R)-pantothenate biosynthesis; (R)-pantoate from 3-methyl-2-oxobutanoate: step 1/2. Catalyzes the reversible reaction in which hydroxymethyl group from 5,10-methylenetetrahydrofolate is transferred onto alpha-ketoisovalerate to form ketopantoate. The sequence is that of 3-methyl-2-oxobutanoate hydroxymethyltransferase from Listeria monocytogenes serovar 1/2a (strain ATCC BAA-679 / EGD-e).